Reading from the N-terminus, the 352-residue chain is Lipid storage droplets surface-binding protein 2 (352 aa).

Disordered regions lie at residues 1–28 and 298–352; these read MASAEQKHATGNGTTGNGTAMNDVDQPK and NVEQ…VSSQ. Residues 298–309 show a composition bias toward polar residues; the sequence is NVEQSGGSSSDA. Positions 315 to 329 are enriched in low complexity; sequence TTTSTTTTTTTSSTS.

The protein belongs to the perilipin family. As to expression, ubiquitous expression in early embryos. At stage 5 expression is restricted to the pole cells. At stage 11 expression is seen in the amnioserosa, refined to the fat body and midgut by stage 14. Also seen in the hindgut by the end of embryogenesis. Expression is seen in larval fat body (at protein level).

It is found in the cytoplasm. It localises to the lipid droplet. Functionally, essential for embryogenesis. Required for normal deposition of neutral lipids in the oocyte. The sequence is that of Lipid storage droplets surface-binding protein 2 from Drosophila melanogaster (Fruit fly).